The sequence spans 283 residues: 4-hydroxy-3-methylbut-2-enyl diphosphate reductase (283 aa).

Residue Cys-12 participates in [4Fe-4S] cluster binding. (2E)-4-hydroxy-3-methylbut-2-enyl diphosphate is bound by residues His-40 and His-73. Dimethylallyl diphosphate contacts are provided by His-40 and His-73. Isopentenyl diphosphate contacts are provided by His-40 and His-73. Position 95 (Cys-95) interacts with [4Fe-4S] cluster. A (2E)-4-hydroxy-3-methylbut-2-enyl diphosphate-binding site is contributed by His-123. His-123 contacts dimethylallyl diphosphate. His-123 contributes to the isopentenyl diphosphate binding site. Glu-125 functions as the Proton donor in the catalytic mechanism. Thr-161 contacts (2E)-4-hydroxy-3-methylbut-2-enyl diphosphate. Cys-189 is a binding site for [4Fe-4S] cluster. Ser-217, Asn-219, and Ser-261 together coordinate (2E)-4-hydroxy-3-methylbut-2-enyl diphosphate. Dimethylallyl diphosphate is bound by residues Ser-217, Asn-219, and Ser-261. 3 residues coordinate isopentenyl diphosphate: Ser-217, Asn-219, and Ser-261.

It belongs to the IspH family. It depends on [4Fe-4S] cluster as a cofactor.

It catalyses the reaction isopentenyl diphosphate + 2 oxidized [2Fe-2S]-[ferredoxin] + H2O = (2E)-4-hydroxy-3-methylbut-2-enyl diphosphate + 2 reduced [2Fe-2S]-[ferredoxin] + 2 H(+). The enzyme catalyses dimethylallyl diphosphate + 2 oxidized [2Fe-2S]-[ferredoxin] + H2O = (2E)-4-hydroxy-3-methylbut-2-enyl diphosphate + 2 reduced [2Fe-2S]-[ferredoxin] + 2 H(+). It participates in isoprenoid biosynthesis; dimethylallyl diphosphate biosynthesis; dimethylallyl diphosphate from (2E)-4-hydroxy-3-methylbutenyl diphosphate: step 1/1. The protein operates within isoprenoid biosynthesis; isopentenyl diphosphate biosynthesis via DXP pathway; isopentenyl diphosphate from 1-deoxy-D-xylulose 5-phosphate: step 6/6. Its function is as follows. Catalyzes the conversion of 1-hydroxy-2-methyl-2-(E)-butenyl 4-diphosphate (HMBPP) into a mixture of isopentenyl diphosphate (IPP) and dimethylallyl diphosphate (DMAPP). Acts in the terminal step of the DOXP/MEP pathway for isoprenoid precursor biosynthesis. This chain is 4-hydroxy-3-methylbut-2-enyl diphosphate reductase, found in Geobacter sp. (strain M21).